Reading from the N-terminus, the 219-residue chain is Bacterial microcompartment shell protein EutL (219 aa).

BMC circularly permuted domains lie at 1 to 113 (MPAL…GAAF) and 114 to 215 (QWAN…ARNP). 4 residues coordinate ethanolamine: Asp-45, Asp-46, Glu-83, and Phe-113. Positions 45-46 (DD) are part of the acidic patch lining the small pore. Glu-157 contributes to the Zn(2+) binding site. 183–185 (TNY) contributes to the ethanolamine binding site.

The protein belongs to the EutL/PduB family. In terms of assembly, homotrimerizes to form a pseudohexamer. The trimers form a two-dimensional array about 37 Angstroms thick.

Its subcellular location is the bacterial microcompartment. It functions in the pathway amine and polyamine degradation; ethanolamine degradation. Its function is as follows. A component of the bacterial microcompartment (BMC) shell dedicated to ethanolamine degradation. Two crystal forms have been seen; a form with a closed central pore that has 3 very small (1.1-2.2 Angstroms) channels per trimer lined by acidic and aromatic residues. A form with a large central pore (8-12 Angstroms) has also been seen; this is probably a functional pore which allows molecules to enter and exit the BMC in a selective, gated manner. Another group only sees the central pore in the presence of Zn(2+); soaking crystals in ZnCl(2) leads to dramatic conformational changes that open a central pore of about 12 Angstroms. Whether Zn(2+) binding is physiologically relevant is unclear, however it suggests a gating mechanism exists. Ethanolamine-binding by the small channels has been hypothesized to stabilize the EutL central pore in a closed (non-transporting) state. An open pore is thought to be large enough to transport ATP and/or cobalamin. This chain is Bacterial microcompartment shell protein EutL (eutL), found in Escherichia coli (strain K12).